A 294-amino-acid polypeptide reads, in one-letter code: Pyridoxal 5'-phosphate synthase subunit PdxS (294 aa).

Aspartate 24 contacts D-ribose 5-phosphate. Lysine 81 functions as the Schiff-base intermediate with D-ribose 5-phosphate in the catalytic mechanism. A D-ribose 5-phosphate-binding site is contributed by glycine 153. Residue arginine 165 participates in D-glyceraldehyde 3-phosphate binding. D-ribose 5-phosphate contacts are provided by residues glycine 214 and 235-236; that span reads GS.

Belongs to the PdxS/SNZ family. In terms of assembly, homohexamer and homododecamer. In the presence of PdxT, forms a dodecamer of heterodimers.

The enzyme catalyses aldehydo-D-ribose 5-phosphate + D-glyceraldehyde 3-phosphate + L-glutamine = pyridoxal 5'-phosphate + L-glutamate + phosphate + 3 H2O + H(+). Its pathway is cofactor biosynthesis; pyridoxal 5'-phosphate biosynthesis. Functionally, catalyzes the formation of pyridoxal 5'-phosphate from ribose 5-phosphate (RBP), glyceraldehyde 3-phosphate (G3P) and ammonia. The ammonia is provided by the PdxT subunit. Can also use ribulose 5-phosphate and dihydroxyacetone phosphate as substrates, resulting from enzyme-catalyzed isomerization of RBP and G3P, respectively. This Geobacillus kaustophilus (strain HTA426) protein is Pyridoxal 5'-phosphate synthase subunit PdxS.